The following is a 370-amino-acid chain: Cytochrome b (370 aa).

The next 4 membrane-spanning stretches (helical) occupy residues 25-45 (FGSMLLTCMALQTSTGFFLAI), 69-90 (WIMQNLHAIGASLFFICIYTHI), 105-125 (WLSGTILLIILMATAFFGYVL), and 170-190 (FFALHFILPFLIISLSSIHIV). Heme b contacts are provided by histidine 75 and histidine 89. Positions 174 and 188 each coordinate heme b. Histidine 193 contributes to the a ubiquinone binding site. The next 4 helical transmembrane spans lie at 218-238 (YKDMLMATTMITMLFITMSFM), 280-300 (LGGTLALLMSVIILTAPPFTH), 312-332 (LTQILFWMLIATFITITWTAT), and 339-358 (FITISQMASTXYFLFFIINP).

This sequence belongs to the cytochrome b family. The cytochrome bc1 complex contains 3 respiratory subunits (MT-CYB, CYC1 and UQCRFS1), 2 core proteins (UQCRC1 and UQCRC2) and probably 6 low-molecular weight proteins. Heme b is required as a cofactor.

The protein resides in the mitochondrion inner membrane. In terms of biological role, component of the ubiquinol-cytochrome c reductase complex (complex III or cytochrome b-c1 complex) that is part of the mitochondrial respiratory chain. The b-c1 complex mediates electron transfer from ubiquinol to cytochrome c. Contributes to the generation of a proton gradient across the mitochondrial membrane that is then used for ATP synthesis. In Micropechis ikaheca (New Guinean small-eyed snake), this protein is Cytochrome b (MT-CYB).